Here is a 234-residue protein sequence, read N- to C-terminus: Probable Ufm1-specific protease 1 (234 aa).

Catalysis depends on residues Cys-70, Asp-194, and His-196.

Belongs to the peptidase C78 family.

Its function is as follows. Thiol protease which recognizes and hydrolyzes the peptide bond at the C-terminal Gly of UFM1, a ubiquitin-like modifier protein bound to a number of target proteins. This is Probable Ufm1-specific protease 1 from Drosophila melanogaster (Fruit fly).